We begin with the raw amino-acid sequence, 355 residues long: Protein-glutamate methylesterase/protein-glutamine glutaminase (355 aa).

One can recognise a Response regulatory domain in the interval Asn-3–Lys-121. Asp-54 carries the 4-aspartylphosphate modification. Positions Pro-154 to Arg-348 constitute a CheB-type methylesterase domain. Residues Ser-170, His-197, and Asp-290 contribute to the active site.

This sequence belongs to the CheB family. Phosphorylated by CheA. Phosphorylation of the N-terminal regulatory domain activates the methylesterase activity.

The protein localises to the cytoplasm. It carries out the reaction [protein]-L-glutamate 5-O-methyl ester + H2O = L-glutamyl-[protein] + methanol + H(+). The enzyme catalyses L-glutaminyl-[protein] + H2O = L-glutamyl-[protein] + NH4(+). Functionally, involved in chemotaxis. Part of a chemotaxis signal transduction system that modulates chemotaxis in response to various stimuli. Catalyzes the demethylation of specific methylglutamate residues introduced into the chemoreceptors (methyl-accepting chemotaxis proteins or MCP) by CheR. Also mediates the irreversible deamidation of specific glutamine residues to glutamic acid. In Nitrosospira multiformis (strain ATCC 25196 / NCIMB 11849 / C 71), this protein is Protein-glutamate methylesterase/protein-glutamine glutaminase.